A 142-amino-acid polypeptide reads, in one-letter code: Fusaric acid resistance protein FusB (142 aa).

Residues 73–142 (AAPCSRKAST…ASCSPAIRPR (70 aa)) form a disordered region. Low complexity predominate over residues 81-142 (STGSPARSSG…ASCSPAIRPR (62 aa)).

In terms of biological role, involved in the resistance (detoxification) of the fungal toxin fusaric acid. The chain is Fusaric acid resistance protein FusB (fusB) from Burkholderia cepacia (Pseudomonas cepacia).